Consider the following 565-residue polypeptide: NAD-dependent malic enzyme (565 aa).

The active-site Proton donor is Tyr104. Arg157 serves as a coordination point for NAD(+). The active-site Proton acceptor is Lys175. A divalent metal cation is bound by residues Glu246, Asp247, and Asp270. NAD(+) contacts are provided by Asp270 and Asn418.

This sequence belongs to the malic enzymes family. In terms of assembly, homotetramer. Mg(2+) serves as cofactor. The cofactor is Mn(2+).

It carries out the reaction (S)-malate + NAD(+) = pyruvate + CO2 + NADH. The enzyme catalyses oxaloacetate + H(+) = pyruvate + CO2. The protein is NAD-dependent malic enzyme of Escherichia coli O6:H1 (strain CFT073 / ATCC 700928 / UPEC).